We begin with the raw amino-acid sequence, 160 residues long: Ribosomal RNA large subunit methyltransferase H (160 aa).

S-adenosyl-L-methionine-binding positions include Leu76, Gly108, and 127–132 (LGKMTW).

It belongs to the RNA methyltransferase RlmH family. As to quaternary structure, homodimer.

It is found in the cytoplasm. It catalyses the reaction pseudouridine(1915) in 23S rRNA + S-adenosyl-L-methionine = N(3)-methylpseudouridine(1915) in 23S rRNA + S-adenosyl-L-homocysteine + H(+). Its function is as follows. Specifically methylates the pseudouridine at position 1915 (m3Psi1915) in 23S rRNA. The protein is Ribosomal RNA large subunit methyltransferase H of Rhizobium etli (strain ATCC 51251 / DSM 11541 / JCM 21823 / NBRC 15573 / CFN 42).